Consider the following 165-residue polypeptide: Hydroxyproline-rich systemin A (165 aa).

Positions 1 to 18 are cleaved as a signal peptide; the sequence is MRVLFLIYLILSPFGAEA. The propeptide occupies 19–35; it reads RTLLENHEGLNVGSGYG. Disordered regions lie at residues 33-70 and 142-165; these read GYGRGANLPPPSPASSPPSKEVSNSVSPTRTDEKTSEN and YWNRKPLSPPSPKPADGQRPLHSY. 4-hydroxyproline occurs at positions 42, 43, 45, 49, and 50. 5 O-linked (Ara...) hydroxyproline glycosylation sites follow: Pro-42, Pro-43, Pro-45, Pro-49, and Pro-50. The propeptide occupies 54-143; sequence VSNSVSPTRT…FDSKSDERYW (90 aa). 4-hydroxyproline is present on residues Pro-150, Pro-151, and Pro-153. 3 O-linked (Ara...) hydroxyproline glycosylation sites follow: Pro-150, Pro-151, and Pro-153. Residues 162 to 165 constitute a propeptide that is removed on maturation; it reads LHSY.

O-glycosylated; contains pentose side chains. As to expression, expressed in leaves.

It localises to the secreted. In terms of biological role, activates a lipid-based signal transduction pathway in which linolenic acid is converted to jasmonic acid, a potent activator of defense gene transcription, including proteinase inhibitors. This is Hydroxyproline-rich systemin A from Nicotiana tabacum (Common tobacco).